Consider the following 459-residue polypeptide: Spermidine/putrescine import ATP-binding protein PotA (459 aa).

The region spanning 15 to 334 (IELIDIVKQF…PRNIWVAKFI (320 aa)) is the ABC transporter domain. Residue 47–54 (GPSGSGKT) participates in ATP binding. Residues 115–203 (RVPKENVKKE…EEFKNKYFKR (89 aa)) form an insert region.

Belongs to the ABC transporter superfamily. Spermidine/putrescine importer (TC 3.A.1.11.1) family. As to quaternary structure, the complex is composed of two ATP-binding proteins (PotA), two transmembrane proteins (PotB and PotC) and a solute-binding protein (PotD).

The protein resides in the cell membrane. The enzyme catalyses ATP + H2O + polyamine-[polyamine-binding protein]Side 1 = ADP + phosphate + polyamineSide 2 + [polyamine-binding protein]Side 1.. Functionally, part of the ABC transporter complex PotABCD involved in spermidine/putrescine import. Responsible for energy coupling to the transport system. The polypeptide is Spermidine/putrescine import ATP-binding protein PotA (Mycoplasmopsis synoviae (strain 53) (Mycoplasma synoviae)).